A 476-amino-acid chain; its full sequence is Protein transport protein Sec61 subunit alpha isoform 1 (476 aa).

Over 1-33 the chain is Cytoplasmic; sequence MAIKFLEVIKPFCVILPEIQKPERKIQFKEKVL. Residues 34–53 form a helical membrane-spanning segment; the sequence is WTAITLFIFLVCCQIPLFGI. Residues 54 to 76 are Lumenal-facing; the sequence is MSSDSADPFYWMRVILASNRGTL. The chain crosses the membrane as a helical span at residues 77–96; sequence MELGISPIVTSGLIMQLLAG. The Cytoplasmic segment spans residues 97–117; that stretch reads AKIIEVGDTPKDRALFNGAQK. A helical membrane pass occupies residues 118 to 138; sequence LFGMIITIGQSIVYVMTGMYG. The Lumenal portion of the chain corresponds to 139-144; sequence DPSEMG. A helical membrane pass occupies residues 145–165; sequence AGICLLITIQLFVAGLIVLLL. At 166–172 the chain is on the cytoplasmic side; that stretch reads DELLQKG. A helical transmembrane segment spans residues 173–193; it reads YGLGSGISLFIATNICETIVW. Topologically, residues 194 to 240 are lumenal; the sequence is KAFSPTTVNTGRGMEFEGAIIALFHLLATRTDKVRALREAFYRQNLP. Residues 241 to 261 form a helical membrane-spanning segment; it reads NLMNLIATIFVFAVVIYFQGF. Residues 262–288 are Cytoplasmic-facing; that stretch reads RVDLPIKSARYRGQYNTYPIKLFYTSN. Residues 289-309 form a helical membrane-spanning segment; sequence IPIILQSALVSNLYVISQMLS. At 310 to 354 the chain is on the lumenal side; it reads ARFSGNLLVSLLGTWSDTSSGGPARAYPVGGLCYYLSPPESFGSV. A helical transmembrane segment spans residues 355–375; it reads LEDPVHAVVYIVFMLGSCAFF. The Cytoplasmic segment spans residues 376–420; it reads SKTWIEVSGSSAKDVAKQLKEQQMVMRGHRETSMVHELNRYIPTA. A helical membrane pass occupies residues 421–441; the sequence is AAFGGLCIGALSVLADFLGAI. Residues 442–445 lie on the Lumenal side of the membrane; that stretch reads GSGT. A helical transmembrane segment spans residues 446–462; that stretch reads GILLAVTIIYQYFEIFV. The Cytoplasmic portion of the chain corresponds to 463–476; it reads KEQSEVGSMGALLF.

It belongs to the SecY/SEC61-alpha family. In terms of assembly, the SEC61 channel-forming translocon complex consists of channel-forming core components SEC61A1, SEC61B and SEC61G and different auxiliary components such as SEC62 and SEC63. The SEC61 channel associates with the multi-pass translocon (MPT) complex. Expressed in proximal and distal tubules in kidney (at protein level).

It localises to the endoplasmic reticulum membrane. Functionally, component of SEC61 channel-forming translocon complex that mediates transport of signal peptide-containing precursor polypeptides across the endoplasmic reticulum (ER). Forms a ribosome receptor and a gated pore in the ER membrane, both functions required for cotranslational translocation of nascent polypeptides. May cooperate with auxiliary protein SEC62, SEC63 and HSPA5/BiP to enable post-translational transport of small presecretory proteins. The SEC61 channel is also involved in ER membrane insertion of transmembrane proteins: it mediates membrane insertion of the first few transmembrane segments of proteins, while insertion of subsequent transmembrane regions of multi-pass membrane proteins is mediated by the multi-pass translocon (MPT) complex. The SEC61 channel cooperates with the translocating protein TRAM1 to import nascent proteins into the ER. Controls the passive efflux of calcium ions from the ER lumen to the cytosol through SEC61 channel, contributing to the maintenance of cellular calcium homeostasis. Plays a critical role in nephrogenesis, specifically at pronephros stage. The chain is Protein transport protein Sec61 subunit alpha isoform 1 (SEC61A1) from Homo sapiens (Human).